Consider the following 514-residue polypeptide: Exoglucanase 1 (514 aa).

Residues 1–17 (MYRKLAVISAFLATARA) form the signal peptide. Gln18 is modified (pyrrolidone carboxylic acid). Positions 18 to 453 (QSACTLQSET…GSTGNPSGGN (436 aa)) are catalytic. 10 disulfide bridges follow: Cys21–Cys89, Cys36–Cys42, Cys67–Cys88, Cys78–Cys84, Cys155–Cys414, Cys189–Cys227, Cys193–Cys226, Cys247–Cys273, Cys255–Cys260, and Cys278–Cys348. The N-linked (GlcNAc) asparagine glycan is linked to Asn62. The active-site Nucleophile is Glu229. The active-site Proton donor/acceptor is the Glu234. Asn287 carries an N-linked (GlcNAc...) (high mannose) asparagine glycan. Residue Asn401 is glycosylated (N-linked (GlcNAc) asparagine). A compositionally biased stretch (polar residues) spans 401–437 (NETSSTPGAVRGSCSTSSGVPAQVESQSPNAKVTFSN). The segment at 401–481 (NETSSTPGAV…TGSSPGPTQS (81 aa)) is disordered. The interval 454 to 478 (PPGGNPPGTTTTRRPATTTGSSPGP) is linker. The segment covering 460 to 479 (PGTTTTRRPATTTGSSPGPT) has biased composition (low complexity). Thr462 carries O-linked (Man) threonine glycosylation. Residues Thr463, Thr464, and Thr465 are each glycosylated (O-linked (Man...) threonine). Residue Thr470 is glycosylated (O-linked (Man) threonine). O-linked (Man...) threonine glycosylation is found at Thr471 and Thr472. O-linked (Man) serine glycans are attached at residues Ser474 and Ser475. A CBM1 domain is found at 478–514 (PTQSHYGQCGGIGYSGPTVCASGTTCQVLNPYYSQCL). Thr479 carries an O-linked (Man) threonine glycan. 2 O-linked (Man) serine glycosylation sites follow: Ser481 and Ser492. Disulfide bonds link Cys486-Cys503 and Cys497-Cys513.

Belongs to the glycosyl hydrolase 7 (cellulase C) family. In terms of processing, N-glycosylated. A high mannose glycan is attached to Asn-287 (predominantly Man(8)GlcNAc(2)) and single GlcNAc occupancy is observed at Asn-62 and Asn-401 with some site heterogeneity depending on strains and fermentation conditions. O-glycosylated. Within the linker domain, all 8 threonines are variably glycosylated with between at least one, and up to three, mannose residues per site. All serines in this domain are at least partially glycosylated with a single mannose residue. O-glycosylation of the cellulase linker provides protection from proteolysis. Linker glycans also contribute to binding affinity of cellobiohydrolases to cellulose.

The protein resides in the secreted. It carries out the reaction Hydrolysis of (1-&gt;4)-beta-D-glucosidic linkages in cellulose and cellotetraose, releasing cellobiose from the non-reducing ends of the chains.. Functionally, exocellobiohydrolases (CBH) that catalyzes the hydrolysis of 1,4-beta-D-glucosidic bonds in cellulose to release the disaccharide cellobiose. The degradation of cellulose involves an interplay between different cellulolytic enzymes. Hydrolysis starts with endoglucanases (EGs), which cut internal beta-1,4-glucosidic bonds in cellulose to reduce the polymerization degree of the substrate and create new chain ends for exocellobiohydrolases (CBHs). The CBHs release the disaccharide cellobiose from the non-reducing end of the cellulose polymer chain. Finally, beta-1,4-glucosidases hydrolyze the cellobiose and other short cello-oligosaccharides into glucose units. This Hypocrea jecorina (strain ATCC 56765 / BCRC 32924 / NRRL 11460 / Rut C-30) (Trichoderma reesei) protein is Exoglucanase 1 (cbh1).